A 732-amino-acid chain; its full sequence is Zinc/cadmium/lead-transporting P-type ATPase (732 aa).

At 1–124 the chain is on the cytoplasmic side; it reads MSTPDNHGKK…QAADEPQASR (124 aa). The HMA domain maps to 48 to 112; sequence TRYSWKVSGM…AVQKAGYSLR (65 aa). Positions 58, 59, and 62 each coordinate Zn(2+). A helical transmembrane segment spans residues 125–145; it reads LKENLPLITLIVMMAISWGLE. Residue Gln146 is a topological domain, periplasmic. The helical transmembrane segment at 147 to 167 threads the bilayer; the sequence is FNHPFGQLAFIATTLVGLYPI. Topologically, residues 168-179 are cytoplasmic; sequence ARQALRLIKSGS. The helical transmembrane segment at 180–197 threads the bilayer; the sequence is YFAIETLMSVAAIGALFI. The Periplasmic portion of the chain corresponds to 198–202; that stretch reads GATAE. The helical transmembrane segment at 203–222 threads the bilayer; sequence AAMVLLLFLIGERLEGWAAS. At 223–356 the chain is on the cytoplasmic side; that stretch reads RARQGVSALM…IDRFSRIYTP (134 aa). A helical transmembrane segment spans residues 357–377; it reads AIMAVALLVTLVPPLLFAASW. Topologically, residues 378–383 are periplasmic; that stretch reads QEWIYK. The helical transmembrane segment at 384–404 threads the bilayer; sequence GLTLLLIGCPCALVISTPAAI. Positions 392 and 394 each coordinate Zn(2+). Topologically, residues 405–685 are cytoplasmic; sequence TSGLAAAARR…RATHANIRQN (281 aa). The 4-aspartylphosphate intermediate role is filled by Asp436. Mg(2+)-binding residues include Asp436, Thr438, and Asp628. Residues 686–702 traverse the membrane as a helical segment; it reads ITIALGLKGIFLVTTLL. Residues 703–707 are Periplasmic-facing; sequence GMTGL. Residues 708-729 form a helical membrane-spanning segment; that stretch reads WLAVLADTGATVLVTANALRLL. Asp714 is a binding site for Zn(2+). The Cytoplasmic segment spans residues 730–732; it reads RRR.

It belongs to the cation transport ATPase (P-type) (TC 3.A.3) family. Type IB subfamily.

The protein resides in the cell inner membrane. The enzyme catalyses Pb(2+)(in) + ATP + H2O = Pb(2+)(out) + ADP + phosphate + H(+). It carries out the reaction Zn(2+)(in) + ATP + H2O = Zn(2+)(out) + ADP + phosphate + H(+). It catalyses the reaction Cd(2+)(in) + ATP + H2O = Cd(2+)(out) + ADP + phosphate + H(+). In terms of biological role, confers resistance to zinc, cadmium and lead. Couples the hydrolysis of ATP with the export of zinc, cadmium or lead. In Shigella sonnei (strain Ss046), this protein is Zinc/cadmium/lead-transporting P-type ATPase.